Reading from the N-terminus, the 271-residue chain is Phosphonoacetaldehyde hydrolase (271 aa).

Asp-12 serves as the catalytic Nucleophile. 2 residues coordinate Mg(2+): Asp-12 and Ala-14. The active-site Schiff-base intermediate with substrate is the Lys-54. Asp-188 lines the Mg(2+) pocket.

The protein belongs to the HAD-like hydrolase superfamily. PhnX family. In terms of assembly, homodimer. Mg(2+) serves as cofactor.

It catalyses the reaction phosphonoacetaldehyde + H2O = acetaldehyde + phosphate + H(+). Involved in phosphonate degradation. The polypeptide is Phosphonoacetaldehyde hydrolase (Vibrio parahaemolyticus serotype O3:K6 (strain RIMD 2210633)).